The sequence spans 49 residues: MARYRCCRSQSRSRCRRRRRRCRRRRRRCCRRRRRVCCRRYTVRCRRRR.

It belongs to the protamine P1 family. Testis.

It localises to the nucleus. It is found in the chromosome. Protamines substitute for histones in the chromatin of sperm during the haploid phase of spermatogenesis. They compact sperm DNA into a highly condensed, stable and inactive complex. The sequence is that of Sperm protamine P1 (PRM1) from Pteropus hypomelanus (Island flying fox).